We begin with the raw amino-acid sequence, 345 residues long: MAMIDLTHDWQLLAQNPAGGLNSSSLLLLVGVFLALFFAAVLGFFFLRYGKLWFQAFMSDADVQLLNLIRMHFTKVNPNVIVQAKVMVAQAGLNIGRRDGISTHRLEAHYLAGGNVMNVIHAIIAAHRAQIPLEFDQAAAIDLAGRDVLDAVQTSVYPKVIDCPDPKRSGKTTLSAITKNGVELRVRTRVTVRTNIEQLIGGATEDTVIARVGEAIISSIGSAETHFKVLENPDMITRVVLSRGLDAQTAFEIVSIDIADIDVGENIGARLQNDQAEADTRVARAQAERRRAEAIAAEQQMNARVSENRSRLVLAEADVPRALAEAFKAGRIGNVSSVAAAEGSA.

Residues 26-46 (LLLLVGVFLALFFAAVLGFFF) traverse the membrane as a helical segment.

This sequence belongs to the flotillin-like FloA family. As to quaternary structure, homooligomerizes.

It localises to the cell membrane. The protein resides in the membrane raft. In terms of biological role, found in functional membrane microdomains (FMM) that may be equivalent to eukaryotic membrane rafts. FMMs are highly dynamic and increase in number as cells age. Flotillins are thought to be important factors in membrane fluidity. This chain is Flotillin-like protein FloA 1, found in Rhodopirellula baltica (strain DSM 10527 / NCIMB 13988 / SH1).